The following is a 1101-amino-acid chain: Nuclear pore complex protein NUP107 (1101 aa).

It belongs to the nucleoporin Nup84/Nup107 family. As to quaternary structure, part of the nuclear pore complex (NPC). The NPC has an eight-fold symmetrical structure comprising a central transport channel and two rings, the cytoplasmic and nuclear rings, to which eight filaments are attached. The cytoplasmic filaments have loose ends, while the nuclear filaments are joined in a distal ring, forming a nuclear basket. NPCs are highly dynamic in configuration and composition, and can be devided in 3 subcomplexes, the NUP62 subcomplex, the NUP107-160 subcomplex and the NUP93 subcomplex, containing approximately 30 different nucleoporin proteins.

It localises to the nucleus envelope. The protein localises to the nucleus. The protein resides in the nuclear pore complex. The chain is Nuclear pore complex protein NUP107 from Arabidopsis thaliana (Mouse-ear cress).